Consider the following 779-residue polypeptide: Conserved oligomeric Golgi complex subunit 6 (779 aa).

This sequence belongs to the COG6 family.

It is found in the golgi apparatus membrane. In terms of biological role, acts as a component of the peripheral membrane COG complex that is involved in intra-Golgi protein trafficking. COG is located at the cis-Golgi, and regulates tethering of retrograde intra-Golgi vesicles and possibly a number of other membrane trafficking events. This chain is Conserved oligomeric Golgi complex subunit 6 (COG6), found in Kluyveromyces lactis (strain ATCC 8585 / CBS 2359 / DSM 70799 / NBRC 1267 / NRRL Y-1140 / WM37) (Yeast).